The sequence spans 453 residues: Chromosomal replication initiator protein DnaA (453 aa).

The tract at residues 1-73 is domain I, interacts with DnaA modulators; the sequence is MELSPQDLWT…ADVVEEILGY (73 aa). The tract at residues 73–110 is domain II; the sequence is YSIDIQLTSTQGENIAIVGETQVSAYYPTLSGEHPKPI. The domain III, AAA+ region stretch occupies residues 111–327; the sequence is KLNPKYTFSR…GALIRAITYI (217 aa). ATP-binding residues include glycine 155, glycine 157, lysine 158, and threonine 159. The domain IV, binds dsDNA stretch occupies residues 328-453; it reads SISGLSMTVE…HLASRTQKTT (126 aa).

Belongs to the DnaA family. In terms of assembly, oligomerizes as a right-handed, spiral filament on DNA at oriC.

It localises to the cytoplasm. In terms of biological role, plays an essential role in the initiation and regulation of chromosomal replication. ATP-DnaA binds to the origin of replication (oriC) to initiate formation of the DNA replication initiation complex once per cell cycle. Binds the DnaA box (a 9 base pair repeat at the origin) and separates the double-stranded (ds)DNA. Forms a right-handed helical filament on oriC DNA; dsDNA binds to the exterior of the filament while single-stranded (ss)DNA is stabiized in the filament's interior. The ATP-DnaA-oriC complex binds and stabilizes one strand of the AT-rich DNA unwinding element (DUE), permitting loading of DNA polymerase. After initiation quickly degrades to an ADP-DnaA complex that is not apt for DNA replication. Binds acidic phospholipids. This is Chromosomal replication initiator protein DnaA from Gloeothece citriformis (strain PCC 7424) (Cyanothece sp. (strain PCC 7424)).